The primary structure comprises 217 residues: Small ribosomal subunit protein uS3c (217 aa).

Residues 47–119 (VRTHIKSSSN…KLHIAIEKVA (73 aa)) enclose the KH type-2 domain.

The protein belongs to the universal ribosomal protein uS3 family. Part of the 30S ribosomal subunit.

It is found in the plastid. It localises to the chloroplast. The polypeptide is Small ribosomal subunit protein uS3c (rps3) (Pinus koraiensis (Korean pine)).